Here is a 115-residue protein sequence, read N- to C-terminus: Large ribosomal subunit protein bL19 (115 aa).

It belongs to the bacterial ribosomal protein bL19 family.

In terms of biological role, this protein is located at the 30S-50S ribosomal subunit interface and may play a role in the structure and function of the aminoacyl-tRNA binding site. This Buchnera aphidicola subsp. Cinara cedri (strain Cc) protein is Large ribosomal subunit protein bL19.